We begin with the raw amino-acid sequence, 402 residues long: Aminotransferase-like protein FGM3 (402 aa).

Pyridoxal 5'-phosphate-binding positions include 137 to 138 (TI), Asp-218, and 282 to 283 (FG).

Belongs to the class-V pyridoxal-phosphate-dependent aminotransferase family. Csd subfamily.

Functionally, aminotransferase-like protein; part of the Fg3_54/C64 gene cluster that mediates the biosynthesis of the octapeptide fusaoctaxin A, a virulence factor that is required for cell-to-cell invasiveness of plant host. The 2 nonribosomal peptide synthetases NRPS9 and NRPS5 form an assembly line which likely utilizes GABA as a starter unit (loaded on the unique module M1 of NRPS9) and sequentially incorporates seven extender units composed of the residues L-Ala, L-allo-Ile, L-Ser, L-Val, L-Ser, L-Leu and L-Leu, respectively. During the process, each of the residues that are tethered on modules M3-M7 of NRPS5 containing an E domain can undergo an epimerization reaction to produce a D-configuration before the transpeptidation reaction occurs. The elongation of the peptidyl chain might be terminated by module M8-mediated L-Leu incorporation, followed by R domain-catalyzed 4 electron reduction to release the resulting octapeptide from the assembly line as an alcohol. Fusaoctaxin A is cleaved by the cluster specific ABC transporter FGM5 to the pentapeptide fusapentaxin A and the tripeptide fusatrixin A. The other enzymes from the cluster, FGM1, FGM2, FGM3 and FGM9 seem not to be involved in the biosynthesis of fusaoctaxin A and their functions have still to be determined. This Gibberella zeae (strain ATCC MYA-4620 / CBS 123657 / FGSC 9075 / NRRL 31084 / PH-1) (Wheat head blight fungus) protein is Aminotransferase-like protein FGM3.